The sequence spans 374 residues: Putative glutamate--cysteine ligase 2 (374 aa).

This sequence belongs to the glutamate--cysteine ligase type 2 family. YbdK subfamily.

The catalysed reaction is L-cysteine + L-glutamate + ATP = gamma-L-glutamyl-L-cysteine + ADP + phosphate + H(+). Its function is as follows. ATP-dependent carboxylate-amine ligase which exhibits weak glutamate--cysteine ligase activity. The chain is Putative glutamate--cysteine ligase 2 from Laribacter hongkongensis (strain HLHK9).